The following is a 315-amino-acid chain: 4-hydroxy-3-methylbut-2-enyl diphosphate reductase (315 aa).

A [4Fe-4S] cluster-binding site is contributed by C12. The (2E)-4-hydroxy-3-methylbut-2-enyl diphosphate site is built by H41 and H74. Residues H41 and H74 each contribute to the dimethylallyl diphosphate site. 2 residues coordinate isopentenyl diphosphate: H41 and H74. A [4Fe-4S] cluster-binding site is contributed by C96. Residue H124 participates in (2E)-4-hydroxy-3-methylbut-2-enyl diphosphate binding. H124 contacts dimethylallyl diphosphate. H124 contacts isopentenyl diphosphate. The active-site Proton donor is E126. T168 serves as a coordination point for (2E)-4-hydroxy-3-methylbut-2-enyl diphosphate. C198 provides a ligand contact to [4Fe-4S] cluster. The (2E)-4-hydroxy-3-methylbut-2-enyl diphosphate site is built by S226, S227, N228, and S270. Dimethylallyl diphosphate-binding residues include S226, S227, N228, and S270. The isopentenyl diphosphate site is built by S226, S227, N228, and S270.

This sequence belongs to the IspH family. Requires [4Fe-4S] cluster as cofactor.

The catalysed reaction is isopentenyl diphosphate + 2 oxidized [2Fe-2S]-[ferredoxin] + H2O = (2E)-4-hydroxy-3-methylbut-2-enyl diphosphate + 2 reduced [2Fe-2S]-[ferredoxin] + 2 H(+). It carries out the reaction dimethylallyl diphosphate + 2 oxidized [2Fe-2S]-[ferredoxin] + H2O = (2E)-4-hydroxy-3-methylbut-2-enyl diphosphate + 2 reduced [2Fe-2S]-[ferredoxin] + 2 H(+). It functions in the pathway isoprenoid biosynthesis; dimethylallyl diphosphate biosynthesis; dimethylallyl diphosphate from (2E)-4-hydroxy-3-methylbutenyl diphosphate: step 1/1. The protein operates within isoprenoid biosynthesis; isopentenyl diphosphate biosynthesis via DXP pathway; isopentenyl diphosphate from 1-deoxy-D-xylulose 5-phosphate: step 6/6. In terms of biological role, catalyzes the conversion of 1-hydroxy-2-methyl-2-(E)-butenyl 4-diphosphate (HMBPP) into a mixture of isopentenyl diphosphate (IPP) and dimethylallyl diphosphate (DMAPP). Acts in the terminal step of the DOXP/MEP pathway for isoprenoid precursor biosynthesis. This chain is 4-hydroxy-3-methylbut-2-enyl diphosphate reductase, found in Pseudomonas syringae pv. tomato (strain ATCC BAA-871 / DC3000).